The following is a 175-amino-acid chain: Sec-independent protein translocase protein TatB (175 aa).

The chain crosses the membrane as a helical span at residues 1–21 (MLDLGLSKMALIGVVALVVLG). Disordered regions lie at residues 96-115 (VSPG…AASG) and 153-175 (VQSG…ARFL). A compositionally biased stretch (basic residues) spans 160 to 175 (VARHRPASLRRPARFL).

It belongs to the TatB family. As to quaternary structure, the Tat system comprises two distinct complexes: a TatABC complex, containing multiple copies of TatA, TatB and TatC subunits, and a separate TatA complex, containing only TatA subunits. Substrates initially bind to the TatABC complex, which probably triggers association of the separate TatA complex to form the active translocon.

The protein localises to the cell inner membrane. Its function is as follows. Part of the twin-arginine translocation (Tat) system that transports large folded proteins containing a characteristic twin-arginine motif in their signal peptide across membranes. Together with TatC, TatB is part of a receptor directly interacting with Tat signal peptides. TatB may form an oligomeric binding site that transiently accommodates folded Tat precursor proteins before their translocation. This is Sec-independent protein translocase protein TatB from Burkholderia mallei (strain ATCC 23344).